A 129-amino-acid chain; its full sequence is MADGDKAAIQFFRGTDEPVVPDIRLTRSRDGRTGQATFIFEQPEALAPETLGNIAGMWMVDEEGELVTREVNGKFVNGKPSALEATYTWKTEQDFERFMRFAERYAETKGLGYSNNSGNNEGADEASEG.

Residues 110–129 form a disordered region; the sequence is GLGYSNNSGNNEGADEASEG.

Belongs to the Psb28 family. Part of the photosystem II complex.

It is found in the cellular thylakoid membrane. The polypeptide is Photosystem II reaction center Psb28 protein (Synechococcus sp. (strain WH7803)).